A 510-amino-acid chain; its full sequence is Aspartate kinase FUB3 (510 aa).

ACT domains lie at 372 to 440 (ILSN…VLPD) and 446 to 510 (LVGA…KNAM).

The protein belongs to the aspartokinase family.

It catalyses the reaction L-aspartate + ATP = 4-phospho-L-aspartate + ADP. Its pathway is mycotoxin biosynthesis. Functionally, aspartate kinase; part of the gene cluster that mediates the biosynthesis of fusaric acid, a mycotoxin with low to moderate toxicity to animals and humans, but with high phytotoxic properties. L-aspartate is suggested as fusaric acid amino acid precursor that is activated and further processed to O-acetyl-L-homoserine by cluster enzymes aspartate kinase FUB3 and homoserine O-acetyltransferase FUB5, as well as enzymes of the primary metabolism. The polyketide synthase (PKS) FUB1 generates the triketide trans-2-hexenal which is presumptively released by the hydrolase FUB4 and linked to the NRPS-bound amino acid precursor by NAD(P)-dependent dehydrogenase FUB6. FUB1, FUB4, and the non-canonical NRPS Fub8 may form an enzyme complex. Further processing of the NRPS-bound intermediate might be carried out by FUB6 and the sulfhydrylase FUB7, enabling a spontaneous electrocyclization to close the carbon backbone of fusaric acid. Dihydrofusaric acid is likely to be released via reduction by the thioester reductase (TR) domain of FUB8 whereupon the final oxidation to fusaric acid may (also) be performed by the FMN-dependent dehydrogenase FUB9. The protein is Aspartate kinase FUB3 of Gibberella moniliformis (strain M3125 / FGSC 7600) (Maize ear and stalk rot fungus).